The chain runs to 494 residues: Probable cytosol aminopeptidase (494 aa).

Mn(2+) contacts are provided by K260 and D265. Residue K272 is part of the active site. D283, D342, and E344 together coordinate Mn(2+). R346 is a catalytic residue.

The protein belongs to the peptidase M17 family. It depends on Mn(2+) as a cofactor.

The protein localises to the cytoplasm. It carries out the reaction Release of an N-terminal amino acid, Xaa-|-Yaa-, in which Xaa is preferably Leu, but may be other amino acids including Pro although not Arg or Lys, and Yaa may be Pro. Amino acid amides and methyl esters are also readily hydrolyzed, but rates on arylamides are exceedingly low.. The catalysed reaction is Release of an N-terminal amino acid, preferentially leucine, but not glutamic or aspartic acids.. Its function is as follows. Presumably involved in the processing and regular turnover of intracellular proteins. Catalyzes the removal of unsubstituted N-terminal amino acids from various peptides. In Bacillus mycoides (strain KBAB4) (Bacillus weihenstephanensis), this protein is Probable cytosol aminopeptidase.